The chain runs to 116 residues: NADH-ubiquinone oxidoreductase chain 3 (116 aa).

Transmembrane regions (helical) follow at residues 3 to 23 (LITT…TVSF), 56 to 76 (FFLI…LLPL), and 87 to 107 (LTLV…IYEW).

It belongs to the complex I subunit 3 family.

It localises to the mitochondrion membrane. The enzyme catalyses a ubiquinone + NADH + 5 H(+)(in) = a ubiquinol + NAD(+) + 4 H(+)(out). Functionally, core subunit of the mitochondrial membrane respiratory chain NADH dehydrogenase (Complex I) that is believed to belong to the minimal assembly required for catalysis. Complex I functions in the transfer of electrons from NADH to the respiratory chain. The immediate electron acceptor for the enzyme is believed to be ubiquinone. In Oncorhynchus kisutch (Coho salmon), this protein is NADH-ubiquinone oxidoreductase chain 3 (MT-ND3).